A 110-amino-acid polypeptide reads, in one-letter code: UPF0060 membrane protein Bcen_0802 (110 aa).

The next 4 helical transmembrane spans lie at Ala-9–Leu-29, Pro-34–Leu-54, Tyr-66–Leu-86, and Arg-88–Pro-108.

It belongs to the UPF0060 family.

The protein resides in the cell inner membrane. The protein is UPF0060 membrane protein Bcen_0802 of Burkholderia orbicola (strain AU 1054).